A 208-amino-acid chain; its full sequence is Redox-sensing transcriptional repressor Rex 1 (208 aa).

The H-T-H motif DNA-binding region spans 15 to 54 (SYYMCLERLLDEGVEVVSSEELARRLDLKASQIRKDLSYF). 89-94 (GAGNIG) contributes to the NAD(+) binding site.

This sequence belongs to the transcriptional regulatory Rex family. In terms of assembly, homodimer.

It is found in the cytoplasm. Functionally, modulates transcription in response to changes in cellular NADH/NAD(+) redox state. The sequence is that of Redox-sensing transcriptional repressor Rex 1 from Thermotoga maritima (strain ATCC 43589 / DSM 3109 / JCM 10099 / NBRC 100826 / MSB8).